Reading from the N-terminus, the 559-residue chain is Glycerol kinase (559 aa).

T20 provides a ligand contact to ADP. ATP-binding residues include T20, S21, and S22. Residue T20 participates in sn-glycerol 3-phosphate binding. R24 is a binding site for ADP. Sn-glycerol 3-phosphate is bound by residues R94, E95, and Y148. The glycerol site is built by R94, E95, and Y148. G252 serves as a coordination point for beta-D-fructose 1,6-bisphosphate. D265 lines the sn-glycerol 3-phosphate pocket. Residues D265 and Q266 each contribute to the glycerol site. Residues T287, G332, G433, and N437 each contribute to the ADP site. ATP is bound by residues T287, G332, and G433. The chain crosses the membrane as a helical span at residues 532–552 (IFCSLPLGFFIVSSMVMLIGA).

The protein belongs to the FGGY kinase family. In terms of tissue distribution, widely expressed in fetal and adult tissues. As to expression, the sole isoform expressed in adult liver and kidney.

It localises to the mitochondrion outer membrane. It is found in the nucleus. Its subcellular location is the cytoplasm. The protein localises to the cytosol. It carries out the reaction glycerol + ATP = sn-glycerol 3-phosphate + ADP + H(+). It functions in the pathway polyol metabolism; glycerol degradation via glycerol kinase pathway; sn-glycerol 3-phosphate from glycerol: step 1/1. With respect to regulation, potassium and magnesium-dependent. Its function is as follows. Kinase that plays a key role in glycerol metabolism, catalyzing its phosphorylation to produce sn-glycerol 3-phosphate. Sn-glycerol 3-phosphate is a crucial intermediate in various metabolic pathways, such as the synthesis of glycerolipids and triglycerides, glycogenesis, glycolysis and gluconeogenesis. In Homo sapiens (Human), this protein is Glycerol kinase.